We begin with the raw amino-acid sequence, 671 residues long: DNA ligase (671 aa).

NAD(+) is bound by residues 32–36, 81–82, and glutamate 113; these read DAEYD and SL. Residue lysine 115 is the N6-AMP-lysine intermediate of the active site. The NAD(+) site is built by arginine 136, glutamate 173, lysine 290, and lysine 314. Zn(2+)-binding residues include cysteine 408, cysteine 411, cysteine 426, and cysteine 432. The BRCT domain maps to 593-671; the sequence is EIDSPFAGKT…EAEMIRLLGA (79 aa).

Belongs to the NAD-dependent DNA ligase family. LigA subfamily. Mg(2+) serves as cofactor. Requires Mn(2+) as cofactor.

It carries out the reaction NAD(+) + (deoxyribonucleotide)n-3'-hydroxyl + 5'-phospho-(deoxyribonucleotide)m = (deoxyribonucleotide)n+m + AMP + beta-nicotinamide D-nucleotide.. Functionally, DNA ligase that catalyzes the formation of phosphodiester linkages between 5'-phosphoryl and 3'-hydroxyl groups in double-stranded DNA using NAD as a coenzyme and as the energy source for the reaction. It is essential for DNA replication and repair of damaged DNA. This chain is DNA ligase, found in Salmonella typhimurium (strain LT2 / SGSC1412 / ATCC 700720).